A 161-amino-acid chain; its full sequence is NADH:FMN oxidoreductase (161 aa).

FMN is bound by residues Asp-30, 37 to 40 (AAST), 54 to 61 (CVQNSSTT), Ala-88, Arg-94, and Phe-151.

Belongs to the non-flavoprotein flavin reductase family.

The protein localises to the cytoplasm. The enzyme catalyses FMNH2 + NAD(+) = FMN + NADH + 2 H(+). The catalysed reaction is FADH2 + NAD(+) = FAD + NADH + 2 H(+). It participates in sulfur metabolism; dibenzothiophene degradation. Its function is as follows. An NADH:FMN oxidoreductase which supplies reduced FMN for the '4S' desulfurization pathway that removes covalently bound sulfur from dibenzothiophene (DBT) without breaking carbon-carbon bonds. Can also use FAD. Provides DszC and probably also DszA (DBT-monooxygenase and DBTO2-monooxygenase respectively) with reduced flavin (FMN and/or FAD). The polypeptide is NADH:FMN oxidoreductase (Mycolicibacterium goodii (Mycobacterium goodii)).